The chain runs to 203 residues: Corrinoid adenosyltransferase (203 aa).

Residues 1–21 (MNESPEKDQRHRERMERKKAV) are disordered. 41 to 47 (GNGKGKS) provides a ligand contact to ATP.

This sequence belongs to the Cob(I)alamin adenosyltransferase family. In terms of assembly, monomer. Mn(2+) serves as cofactor.

The protein localises to the cytoplasm. The enzyme catalyses 2 cob(II)yrinate a,c diamide + reduced [electron-transfer flavoprotein] + 2 ATP = 2 adenosylcob(III)yrinate a,c-diamide + 2 triphosphate + oxidized [electron-transfer flavoprotein] + 3 H(+). It catalyses the reaction 2 cob(II)alamin + reduced [electron-transfer flavoprotein] + 2 ATP = 2 adenosylcob(III)alamin + 2 triphosphate + oxidized [electron-transfer flavoprotein] + 3 H(+). The protein operates within cofactor biosynthesis; adenosylcobalamin biosynthesis; adenosylcobalamin from cob(II)yrinate a,c-diamide: step 2/7. Functionally, required for both de novo synthesis of the corrin ring for the assimilation of exogenous corrinoids. Participates in the adenosylation of a variety of incomplete and complete corrinoids. The protein is Corrinoid adenosyltransferase (cobO) of Pseudomonas aeruginosa (strain ATCC 15692 / DSM 22644 / CIP 104116 / JCM 14847 / LMG 12228 / 1C / PRS 101 / PAO1).